A 479-amino-acid chain; its full sequence is Lactaldehyde dehydrogenase (479 aa).

NAD(+) is bound at residue Leu150. Residue Arg161 participates in (S)-lactate binding. Residues 176 to 179 (KPSE), Gln214, and Ser230 contribute to the NAD(+) site. Residue Glu251 coordinates (S)-lactate. Residues Glu251 and Cys285 contribute to the active site. Asn286 provides a ligand contact to (S)-lactate. Position 336 (Arg336) interacts with NAD(+). (S)-lactate-binding residues include Glu443 and His449.

This sequence belongs to the aldehyde dehydrogenase family. As to quaternary structure, homotetramer.

The catalysed reaction is (S)-lactaldehyde + NAD(+) + H2O = (S)-lactate + NADH + 2 H(+). The enzyme catalyses glycolaldehyde + NAD(+) + H2O = glycolate + NADH + 2 H(+). The protein operates within carbohydrate degradation; L-fucose degradation. Its pathway is carbohydrate degradation; L-rhamnose degradation. With respect to regulation, substrate inhibition is very strong with lactaldehyde, diminishing progressively with glycolaldehyde, glyceraldehyde or methylglyoxal. Inhibited by p-hydroxy mercuribenzoate and by some cations, including Mn(2+), Ca(2+), Cu(2+) and Zn(2+). Inhibited by NADH. Functionally, catalyzes the irreversible oxidation of L-lactaldehyde to L-lactate. Also shows high activity with glycolaldehyde and L-glyceraldehyde. Has weaker activity with various aldehydes such as methylglyoxal, propionaldehyde or benzaldehyde. Involved in the degradation of lactaldehyde produced during metabolism of L-fucose and L-rhamnose. It may be involved in several other metabolic pathways. The sequence is that of Lactaldehyde dehydrogenase (aldA) from Escherichia coli (strain K12).